The chain runs to 268 residues: Type III pantothenate kinase (268 aa).

ATP is bound at residue 18–25; sequence DIGNTTTT. Substrate is bound by residues Y108 and 115-118; that span reads GADR. Catalysis depends on D117, which acts as the Proton acceptor. A K(+)-binding site is contributed by D138. Residue T141 participates in ATP binding. Position 193 (T193) interacts with substrate.

Belongs to the type III pantothenate kinase family. In terms of assembly, homodimer. It depends on NH4(+) as a cofactor. Requires K(+) as cofactor.

The protein resides in the cytoplasm. The catalysed reaction is (R)-pantothenate + ATP = (R)-4'-phosphopantothenate + ADP + H(+). It participates in cofactor biosynthesis; coenzyme A biosynthesis; CoA from (R)-pantothenate: step 1/5. Catalyzes the phosphorylation of pantothenate (Pan), the first step in CoA biosynthesis. This Chlorobaculum parvum (strain DSM 263 / NCIMB 8327) (Chlorobium vibrioforme subsp. thiosulfatophilum) protein is Type III pantothenate kinase.